We begin with the raw amino-acid sequence, 475 residues long: Ribulose bisphosphate carboxylase large chain (475 aa).

A propeptide spanning residues 1–2 is cleaved from the precursor; that stretch reads MS. The residue at position 3 (P3) is an N-acetylproline. Residue K14 is modified to N6,N6,N6-trimethyllysine. Substrate-binding residues include N123 and T173. The Proton acceptor role is filled by K175. K177 is a substrate binding site. Mg(2+) contacts are provided by K201, D203, and E204. At K201 the chain carries N6-carboxylysine. The active-site Proton acceptor is H294. R295, H327, and S379 together coordinate substrate.

Belongs to the RuBisCO large chain family. Type I subfamily. In terms of assembly, heterohexadecamer of 8 large chains and 8 small chains; disulfide-linked. The disulfide link is formed within the large subunit homodimers. Mg(2+) serves as cofactor. The disulfide bond which can form in the large chain dimeric partners within the hexadecamer appears to be associated with oxidative stress and protein turnover.

The protein localises to the plastid. Its subcellular location is the chloroplast. The catalysed reaction is 2 (2R)-3-phosphoglycerate + 2 H(+) = D-ribulose 1,5-bisphosphate + CO2 + H2O. The enzyme catalyses D-ribulose 1,5-bisphosphate + O2 = 2-phosphoglycolate + (2R)-3-phosphoglycerate + 2 H(+). In terms of biological role, ruBisCO catalyzes two reactions: the carboxylation of D-ribulose 1,5-bisphosphate, the primary event in carbon dioxide fixation, as well as the oxidative fragmentation of the pentose substrate in the photorespiration process. Both reactions occur simultaneously and in competition at the same active site. The chain is Ribulose bisphosphate carboxylase large chain from Quercus rubra (Northern red oak).